A 621-amino-acid chain; its full sequence is Putative zinc metalloprotease CPn_0344/CP_0416/CPj0344/CpB0350 (621 aa).

H20 contributes to the Zn(2+) binding site. E21 is a catalytic residue. H24 serves as a coordination point for Zn(2+). 3 helical membrane passes run I103 to Y125, V561 to V583, and I596 to F613.

It belongs to the peptidase M50B family. Requires Zn(2+) as cofactor.

Its subcellular location is the cell inner membrane. This chain is Putative zinc metalloprotease CPn_0344/CP_0416/CPj0344/CpB0350, found in Chlamydia pneumoniae (Chlamydophila pneumoniae).